We begin with the raw amino-acid sequence, 113 residues long: U11-theraphotoxin-Hhn1a (113 aa).

The first 21 residues, 1-21 (MNTVRVAFLLVFVLAVSLGQA), serve as a signal peptide directing secretion. The propeptide occupies 22 to 74 (DKDENRMEMQEKTEQGKSYLDFAENLLLQKLEEPEAKLLEEDSEESRNSRQKR). Basic and acidic residues predominate over residues 58 to 69 (KLLEEDSEESRN). A disordered region spans residues 58-83 (KLLEEDSEESRNSRQKRCIGEGVPCD). 3 disulfides stabilise this stretch: C75-C90, C82-C95, and C89-C110.

The protein belongs to the neurotoxin 14 (magi-1) family. 01 (HNTX-16) subfamily. As to expression, expressed by the venom gland.

The protein localises to the secreted. Functionally, probable ion channel inhibitor. This chain is U11-theraphotoxin-Hhn1a, found in Cyriopagopus hainanus (Chinese bird spider).